Here is a 206-residue protein sequence, read N- to C-terminus: Large ribosomal subunit protein uL4 (206 aa).

Residues 49 to 76 (QSAKTRTEVRGGGIKPWRQKGTGRARQG) form a disordered region.

It belongs to the universal ribosomal protein uL4 family. In terms of assembly, part of the 50S ribosomal subunit.

In terms of biological role, one of the primary rRNA binding proteins, this protein initially binds near the 5'-end of the 23S rRNA. It is important during the early stages of 50S assembly. It makes multiple contacts with different domains of the 23S rRNA in the assembled 50S subunit and ribosome. Its function is as follows. Forms part of the polypeptide exit tunnel. The chain is Large ribosomal subunit protein uL4 from Clostridium botulinum (strain Alaska E43 / Type E3).